A 496-amino-acid polypeptide reads, in one-letter code: Xylulose kinase (496 aa).

A substrate-binding site is contributed by 83–84 (MH). D237 serves as the catalytic Proton acceptor.

Belongs to the FGGY kinase family.

The enzyme catalyses D-xylulose + ATP = D-xylulose 5-phosphate + ADP + H(+). Catalyzes the phosphorylation of D-xylulose to D-xylulose 5-phosphate. The sequence is that of Xylulose kinase from Staphylococcus epidermidis (strain ATCC 35984 / DSM 28319 / BCRC 17069 / CCUG 31568 / BM 3577 / RP62A).